The following is a 288-amino-acid chain: Ribosomal RNA small subunit methyltransferase A (288 aa).

Residues Asn-28, Leu-30, Gly-55, Glu-76, Asp-101, and Asn-130 each contribute to the S-adenosyl-L-methionine site.

This sequence belongs to the class I-like SAM-binding methyltransferase superfamily. rRNA adenine N(6)-methyltransferase family. RsmA subfamily.

Its subcellular location is the cytoplasm. It catalyses the reaction adenosine(1518)/adenosine(1519) in 16S rRNA + 4 S-adenosyl-L-methionine = N(6)-dimethyladenosine(1518)/N(6)-dimethyladenosine(1519) in 16S rRNA + 4 S-adenosyl-L-homocysteine + 4 H(+). Functionally, specifically dimethylates two adjacent adenosines (A1518 and A1519) in the loop of a conserved hairpin near the 3'-end of 16S rRNA in the 30S particle. May play a critical role in biogenesis of 30S subunits. This is Ribosomal RNA small subunit methyltransferase A from Moorella thermoacetica (strain ATCC 39073 / JCM 9320).